The following is a 198-amino-acid chain: MYYPEPIARLIESFSKLPGIGQKTATRLAFYTIGMEDQDVNEFAKNLLSAKRDLRFCSICGNLTESDPCAICTDPTRDRTTILVVEESKDVLAMEKIREYRGLYHVLHGTISPMNGISPDEINVKSLITRLMDSEVKEVIIATNATSDGEATAMYLARMIKPAGIKVTRLAHGLAVGSDIEYADEVTLSKAVENRLEI.

The C4-type zinc-finger motif lies at 57–72 (CSICGNLTESDPCAIC). The Toprim domain occupies 80–175 (TTILVVEESK…KVTRLAHGLA (96 aa)).

It belongs to the RecR family.

May play a role in DNA repair. It seems to be involved in an RecBC-independent recombinational process of DNA repair. It may act with RecF and RecO. This chain is Recombination protein RecR, found in Lactococcus lactis subsp. cremoris (strain SK11).